A 229-amino-acid polypeptide reads, in one-letter code: IPRHPTLANVRQAFAEQPLAHAALNSLLVALATAAVTVLIATPMAYVMARHRTKAARAATGWVVVSQAFPFVLLIIPLFLVLKRLRLIDSLTGLVLVYVVWSLPFALWMLAGHARAVPAELEEAAAVDGAGRVRTLTSVTVPLLAPGIAATALFAFVTAWNEFFFALVLLKSPHRQTLPVVLTHFIGAEGVPTSPAGAAAFLATLPSLAFFALVQRRITSGLLTGAVKN.

Residues 23-214 (ALNSLLVALA…LPSLAFFALV (192 aa)) enclose the ABC transmembrane type-1 domain. A run of 5 helical transmembrane segments spans residues 27–47 (LLVA…MAYV), 62–82 (WVVV…FLVL), 91–111 (LTGL…WMLA), 150–170 (ATAL…LVLL), and 194–214 (SPAG…FALV).

The protein belongs to the binding-protein-dependent transport system permease family. MalFG subfamily.

The protein resides in the cell membrane. Functionally, may participate in oleandomycin secretion during antibiotic production. This is Putative ABC transporter permease protein ORF1 from Streptomyces antibioticus.